The primary structure comprises 506 residues: Maturase K (506 aa).

This sequence belongs to the intron maturase 2 family. MatK subfamily.

The protein localises to the plastid. Its subcellular location is the chloroplast. In terms of biological role, usually encoded in the trnK tRNA gene intron. Probably assists in splicing its own and other chloroplast group II introns. The protein is Maturase K of Pisum sativum (Garden pea).